We begin with the raw amino-acid sequence, 415 residues long: Multidrug resistance protein MdtA (415 aa).

Residues 1–21 (MKGSYKSRWVIVIVVVIAAIA) form the signal peptide. Polar residues predominate over residues 31-46 (DSQSAAPGATKQAQQS). Disordered stretches follow at residues 31–56 (DSQSAAPGATKQAQQSPAGGRRGMRA) and 391–415 (VEAQSTTTPEEKATSREYAKKGARS). Basic and acidic residues predominate over residues 399–415 (PEEKATSREYAKKGARS).

The protein belongs to the membrane fusion protein (MFP) (TC 8.A.1) family. Part of a tripartite efflux system composed of MdtA, MdtB and MdtC.

Its subcellular location is the cell inner membrane. Functionally, the MdtABC tripartite complex confers resistance against novobiocin and deoxycholate. The polypeptide is Multidrug resistance protein MdtA (Escherichia coli O45:K1 (strain S88 / ExPEC)).